The sequence spans 62 residues: Dual specificity mitogen-activated protein kinase kinase 3 (62 aa).

The 62-residue stretch at glycine 1 to lysine 62 folds into the Protein kinase domain.

The protein belongs to the protein kinase superfamily. STE Ser/Thr protein kinase family. MAP kinase kinase subfamily. Activated by phosphorylation on Ser/Thr catalyzed by MAP kinase kinase kinases.

The catalysed reaction is L-seryl-[protein] + ATP = O-phospho-L-seryl-[protein] + ADP + H(+). The enzyme catalyses L-threonyl-[protein] + ATP = O-phospho-L-threonyl-[protein] + ADP + H(+). It catalyses the reaction L-tyrosyl-[protein] + ATP = O-phospho-L-tyrosyl-[protein] + ADP + H(+). Catalyzes the concomitant phosphorylation of a threonine and a tyrosine residue in a Thr-Glu-Tyr sequence located in MAP kinases. The protein is Dual specificity mitogen-activated protein kinase kinase 3 (map2k3) of Xenopus laevis (African clawed frog).